The following is a 424-amino-acid chain: Histidine--tRNA ligase (424 aa).

It belongs to the class-II aminoacyl-tRNA synthetase family. As to quaternary structure, homodimer.

It localises to the cytoplasm. It carries out the reaction tRNA(His) + L-histidine + ATP = L-histidyl-tRNA(His) + AMP + diphosphate + H(+). The protein is Histidine--tRNA ligase of Salmonella agona (strain SL483).